The primary structure comprises 137 residues: MLQPKRTKYRKQMKGRNRGLALRGSKISFGEFGLKAVERGRLTARQIEAARRAMTRHIKRGGKIWIRVFPDKPITQKPLEVRQGKGKGSVEYWVAQIQPGKVLFEMEGVSKELAMEAFDLAKAKLPFKVMFEERTVM.

Belongs to the universal ribosomal protein uL16 family. As to quaternary structure, part of the 50S ribosomal subunit.

Its function is as follows. Binds 23S rRNA and is also seen to make contacts with the A and possibly P site tRNAs. This chain is Large ribosomal subunit protein uL16, found in Legionella pneumophila (strain Paris).